We begin with the raw amino-acid sequence, 314 residues long: Porphobilinogen deaminase (314 aa).

At Cys-234 the chain carries S-(dipyrrolylmethanemethyl)cysteine.

The protein belongs to the HMBS family. Monomer. Requires dipyrromethane as cofactor.

The catalysed reaction is 4 porphobilinogen + H2O = hydroxymethylbilane + 4 NH4(+). It participates in porphyrin-containing compound metabolism; protoporphyrin-IX biosynthesis; coproporphyrinogen-III from 5-aminolevulinate: step 2/4. Its function is as follows. Tetrapolymerization of the monopyrrole PBG into the hydroxymethylbilane pre-uroporphyrinogen in several discrete steps. The sequence is that of Porphobilinogen deaminase from Mycobacterium marinum (strain ATCC BAA-535 / M).